A 560-amino-acid polypeptide reads, in one-letter code: Dihydroxy-acid dehydratase (560 aa).

Asp78 contacts Mg(2+). Cys119 provides a ligand contact to [2Fe-2S] cluster. Asp120 and Lys121 together coordinate Mg(2+). Lys121 is modified (N6-carboxylysine). Cys192 is a [2Fe-2S] cluster binding site. Glu446 is a Mg(2+) binding site. The Proton acceptor role is filled by Ser472.

It belongs to the IlvD/Edd family. As to quaternary structure, homodimer. [2Fe-2S] cluster is required as a cofactor. The cofactor is Mg(2+).

The catalysed reaction is (2R)-2,3-dihydroxy-3-methylbutanoate = 3-methyl-2-oxobutanoate + H2O. It catalyses the reaction (2R,3R)-2,3-dihydroxy-3-methylpentanoate = (S)-3-methyl-2-oxopentanoate + H2O. Its pathway is amino-acid biosynthesis; L-isoleucine biosynthesis; L-isoleucine from 2-oxobutanoate: step 3/4. The protein operates within amino-acid biosynthesis; L-valine biosynthesis; L-valine from pyruvate: step 3/4. In terms of biological role, functions in the biosynthesis of branched-chain amino acids. Catalyzes the dehydration of (2R,3R)-2,3-dihydroxy-3-methylpentanoate (2,3-dihydroxy-3-methylvalerate) into 2-oxo-3-methylpentanoate (2-oxo-3-methylvalerate) and of (2R)-2,3-dihydroxy-3-methylbutanoate (2,3-dihydroxyisovalerate) into 2-oxo-3-methylbutanoate (2-oxoisovalerate), the penultimate precursor to L-isoleucine and L-valine, respectively. The chain is Dihydroxy-acid dehydratase from Anaeromyxobacter dehalogenans (strain 2CP-1 / ATCC BAA-258).